Here is a 379-residue protein sequence, read N- to C-terminus: MGEFVFCYGSQNKKCLSKYIKQTKNSYKLYLSDNNYIYFDKIKTQDCQKYIEVDFNNSFEFLKFIVKKKIYCDMHNRNCKSFCFHNNYFKYIVENKHYDIIKFFCKKFIPLIKSNRNIYSFPYSLPMYVDLDDFNYIFKHSCLEDIYPSIIQVLRYNRDITIEFMDDIFSIYKNKLTKLFINDNILDLDSKFEIGPQIFLTPSFVKDDVNLFDFIIEEICNLTSEIDKTKLDKKQLKLLENFKVKFDSEFICEIIYSRMLHDFEDILQVEDTYFCPKIFKQMLPNISDLINSLTHNRIIQFIIAYNIVEYMGILCDFIGDTEPKFINNMLIKATSTEMGQLLIDYGADYEKLYRSTSFKNCSDCVKKLVKKIIKETSDS.

Belongs to the mimivirus L17x/L18x family.

This is an uncharacterized protein from Acanthamoeba polyphaga mimivirus (APMV).